The sequence spans 135 residues: S-protein homolog 29 (135 aa).

Residues 1 to 24 form the signal peptide; it reads MKNSSKIFVVLSIILFYVISSCHG. N-linked (GlcNAc...) asparagine glycosylation occurs at Asn-110.

The protein belongs to the plant self-incompatibility (S1) protein family.

The protein localises to the secreted. This is S-protein homolog 29 from Arabidopsis thaliana (Mouse-ear cress).